Consider the following 310-residue polypeptide: 4-hydroxythreonine-4-phosphate dehydrogenase (310 aa).

Substrate is bound by residues His-126 and Thr-127. A divalent metal cation-binding residues include His-156, His-195, and His-251. Lys-259, Asn-268, and Arg-277 together coordinate substrate.

This sequence belongs to the PdxA family. As to quaternary structure, homodimer. Zn(2+) serves as cofactor. It depends on Mg(2+) as a cofactor. The cofactor is Co(2+).

Its subcellular location is the cytoplasm. The enzyme catalyses 4-(phosphooxy)-L-threonine + NAD(+) = 3-amino-2-oxopropyl phosphate + CO2 + NADH. It functions in the pathway cofactor biosynthesis; pyridoxine 5'-phosphate biosynthesis; pyridoxine 5'-phosphate from D-erythrose 4-phosphate: step 4/5. Its function is as follows. Catalyzes the NAD(P)-dependent oxidation of 4-(phosphooxy)-L-threonine (HTP) into 2-amino-3-oxo-4-(phosphooxy)butyric acid which spontaneously decarboxylates to form 3-amino-2-oxopropyl phosphate (AHAP). The sequence is that of 4-hydroxythreonine-4-phosphate dehydrogenase from Helicobacter acinonychis (strain Sheeba).